The following is a 269-amino-acid chain: Major pollen allergen Pha a 1 (269 aa).

The N-terminal stretch at 1–29 (MMKMVCSSSSSSLLVVAALLAVFVGSAQG) is a signal peptide. N-linked (GlcNAc...) asparagine glycosylation occurs at asparagine 38. Residues 67 to 173 (GGACGYKDVD…RRVKCKYPDG (107 aa)) form the Expansin-like EG45 domain. The Expansin-like CBD domain maps to 187–268 (NYLALLVKYV…GWKADTHDAS (82 aa)).

The protein belongs to the expansin family. Expansin B subfamily.

Its subcellular location is the secreted. This chain is Major pollen allergen Pha a 1, found in Phalaris aquatica (Canary grass).